The following is a 348-amino-acid chain: Uroporphyrinogen decarboxylase (348 aa).

Residues 27–31 (RQAGR), Phe-46, Asp-76, Tyr-152, Ser-207, and His-320 each bind substrate.

The protein belongs to the uroporphyrinogen decarboxylase family. As to quaternary structure, homodimer.

The protein resides in the cytoplasm. The enzyme catalyses uroporphyrinogen III + 4 H(+) = coproporphyrinogen III + 4 CO2. Its pathway is porphyrin-containing compound metabolism; protoporphyrin-IX biosynthesis; coproporphyrinogen-III from 5-aminolevulinate: step 4/4. Functionally, catalyzes the decarboxylation of four acetate groups of uroporphyrinogen-III to yield coproporphyrinogen-III. This is Uroporphyrinogen decarboxylase from Bacillus mycoides (strain KBAB4) (Bacillus weihenstephanensis).